We begin with the raw amino-acid sequence, 487 residues long: Glutamate--tRNA ligase (487 aa).

The 'HIGH' region motif lies at 10–20; that stretch reads PSPTGYMHVGN. Residues 251–255 carry the 'KMSKS' region motif; sequence KLSKR. Lys-254 contributes to the ATP binding site.

Belongs to the class-I aminoacyl-tRNA synthetase family. Glutamate--tRNA ligase type 1 subfamily. As to quaternary structure, monomer.

Its subcellular location is the cytoplasm. The enzyme catalyses tRNA(Glu) + L-glutamate + ATP = L-glutamyl-tRNA(Glu) + AMP + diphosphate. In terms of biological role, catalyzes the attachment of glutamate to tRNA(Glu) in a two-step reaction: glutamate is first activated by ATP to form Glu-AMP and then transferred to the acceptor end of tRNA(Glu). This Clostridium kluyveri (strain ATCC 8527 / DSM 555 / NBRC 12016 / NCIMB 10680 / K1) protein is Glutamate--tRNA ligase.